The sequence spans 171 residues: Photosystem I assembly protein Ycf3 (171 aa).

TPR repeat units lie at residues alanine 35–alanine 68, serine 72–leucine 105, and glycine 120–asparagine 153.

Belongs to the Ycf3 family.

The protein localises to the plastid. It is found in the chloroplast thylakoid membrane. Its function is as follows. Essential for the assembly of the photosystem I (PSI) complex. May act as a chaperone-like factor to guide the assembly of the PSI subunits. This chain is Photosystem I assembly protein Ycf3, found in Nephroselmis olivacea (Green alga).